The following is a 258-amino-acid chain: MSLIDPRAIIDPSAVLAADVEVGPWSIIGAGVEIGEGTVIGPHVILKGPTRIGKHNRIYQFSSVGEDTPDMKYKGEETRLVIGDHNIIREGVTIHRGTVQDRAETTLGDHNLVMAYAHIGHDSVIGNHCILVNNTALAGHVHVDDWAILSGFTLVHQYCHIGAHSFSGMGTAIGKDVPAFVTVFGNPAEARSMNFEGMRRRGFSEEAIHALRRAYKVVYRQGLTVDQALTQLLEPAALFPEVAVFRDSIQASTRGITR.

It belongs to the transferase hexapeptide repeat family. LpxA subfamily. As to quaternary structure, homotrimer.

The protein localises to the cytoplasm. It carries out the reaction a (3R)-hydroxyacyl-[ACP] + UDP-N-acetyl-alpha-D-glucosamine = a UDP-3-O-[(3R)-3-hydroxyacyl]-N-acetyl-alpha-D-glucosamine + holo-[ACP]. Its pathway is glycolipid biosynthesis; lipid IV(A) biosynthesis; lipid IV(A) from (3R)-3-hydroxytetradecanoyl-[acyl-carrier-protein] and UDP-N-acetyl-alpha-D-glucosamine: step 1/6. Functionally, involved in the biosynthesis of lipid A, a phosphorylated glycolipid that anchors the lipopolysaccharide to the outer membrane of the cell. The sequence is that of Acyl-[acyl-carrier-protein]--UDP-N-acetylglucosamine O-acyltransferase from Pseudomonas fluorescens (strain SBW25).